Consider the following 126-residue polypeptide: Large ribosomal subunit protein eL32 (126 aa).

The protein belongs to the eukaryotic ribosomal protein eL32 family. As to quaternary structure, part of the 50S ribosomal subunit.

This is Large ribosomal subunit protein eL32 (rpl32e) from Thermococcus kodakarensis (strain ATCC BAA-918 / JCM 12380 / KOD1) (Pyrococcus kodakaraensis (strain KOD1)).